A 570-amino-acid polypeptide reads, in one-letter code: Urease subunit alpha (570 aa).

Positions 131 to 570 (GGFDSHIHFI…LPLAQRYFMF (440 aa)) constitute a Urease domain. Ni(2+) contacts are provided by H136, H138, and K219. K219 bears the N6-carboxylysine mark. H221 is a substrate binding site. Ni(2+) is bound by residues H248 and H274. The Proton donor role is filled by H322. Ni(2+) is bound at residue D362.

This sequence belongs to the metallo-dependent hydrolases superfamily. Urease alpha subunit family. As to quaternary structure, heterotrimer of UreA (gamma), UreB (beta) and UreC (alpha) subunits. Three heterotrimers associate to form the active enzyme. Ni cation is required as a cofactor. In terms of processing, carboxylation allows a single lysine to coordinate two nickel ions.

Its subcellular location is the cytoplasm. The catalysed reaction is urea + 2 H2O + H(+) = hydrogencarbonate + 2 NH4(+). It functions in the pathway nitrogen metabolism; urea degradation; CO(2) and NH(3) from urea (urease route): step 1/1. This chain is Urease subunit alpha, found in Rhodopseudomonas palustris (strain TIE-1).